A 499-amino-acid chain; its full sequence is Type-1 glutamine synthetase 1 (499 aa).

The GS beta-grasp domain occupies 50 to 146; the sequence is PQLKFIRVCW…IFGEFFYLDN (97 aa). Residues 158–499 form the GS catalytic domain; that stretch reads PRNSLQRAID…DQILKLLELF (342 aa).

This sequence belongs to the glutamine synthetase family.

It catalyses the reaction L-glutamate + NH4(+) + ATP = L-glutamine + ADP + phosphate + H(+). The sequence is that of Type-1 glutamine synthetase 1 (glnA1) from Dictyostelium discoideum (Social amoeba).